The primary structure comprises 410 residues: LL-diaminopimelate aminotransferase (410 aa).

2 residues coordinate substrate: Tyr15 and Gly42. Pyridoxal 5'-phosphate-binding positions include Tyr72, 108–109, Tyr132, Asn188, Tyr219, and 247–249; these read AK and SFS. The substrate site is built by Lys109, Tyr132, and Asn188. N6-(pyridoxal phosphate)lysine is present on Lys250. Pyridoxal 5'-phosphate-binding residues include Arg258 and Asn293. Substrate is bound by residues Asn293 and Arg389.

Belongs to the class-I pyridoxal-phosphate-dependent aminotransferase family. LL-diaminopimelate aminotransferase subfamily. Homodimer. The cofactor is pyridoxal 5'-phosphate.

It carries out the reaction (2S,6S)-2,6-diaminopimelate + 2-oxoglutarate = (S)-2,3,4,5-tetrahydrodipicolinate + L-glutamate + H2O + H(+). It participates in amino-acid biosynthesis; L-lysine biosynthesis via DAP pathway; LL-2,6-diaminopimelate from (S)-tetrahydrodipicolinate (aminotransferase route): step 1/1. Its function is as follows. Involved in the synthesis of meso-diaminopimelate (m-DAP or DL-DAP), required for both lysine and peptidoglycan biosynthesis. Catalyzes the direct conversion of tetrahydrodipicolinate to LL-diaminopimelate. In Bacteroides fragilis (strain YCH46), this protein is LL-diaminopimelate aminotransferase.